The sequence spans 93 residues: Putative hemolysin E-like protein (93 aa).

It belongs to the hemolysin E family.

The polypeptide is Putative hemolysin E-like protein (Escherichia coli O6:H1 (strain CFT073 / ATCC 700928 / UPEC)).